Here is a 245-residue protein sequence, read N- to C-terminus: tRNA1(Val) (adenine(37)-N6)-methyltransferase (245 aa).

This sequence belongs to the methyltransferase superfamily. tRNA (adenine-N(6)-)-methyltransferase family.

The protein resides in the cytoplasm. It carries out the reaction adenosine(37) in tRNA1(Val) + S-adenosyl-L-methionine = N(6)-methyladenosine(37) in tRNA1(Val) + S-adenosyl-L-homocysteine + H(+). In terms of biological role, specifically methylates the adenine in position 37 of tRNA(1)(Val) (anticodon cmo5UAC). The polypeptide is tRNA1(Val) (adenine(37)-N6)-methyltransferase (Salmonella typhi).